Here is a 469-residue protein sequence, read N- to C-terminus: Aspartyl/glutamyl-tRNA(Asn/Gln) amidotransferase subunit B (469 aa).

Belongs to the GatB/GatE family. GatB subfamily. In terms of assembly, heterotrimer of A, B and C subunits.

It catalyses the reaction L-glutamyl-tRNA(Gln) + L-glutamine + ATP + H2O = L-glutaminyl-tRNA(Gln) + L-glutamate + ADP + phosphate + H(+). It carries out the reaction L-aspartyl-tRNA(Asn) + L-glutamine + ATP + H2O = L-asparaginyl-tRNA(Asn) + L-glutamate + ADP + phosphate + 2 H(+). Functionally, allows the formation of correctly charged Asn-tRNA(Asn) or Gln-tRNA(Gln) through the transamidation of misacylated Asp-tRNA(Asn) or Glu-tRNA(Gln) in organisms which lack either or both of asparaginyl-tRNA or glutaminyl-tRNA synthetases. The reaction takes place in the presence of glutamine and ATP through an activated phospho-Asp-tRNA(Asn) or phospho-Glu-tRNA(Gln). This is Aspartyl/glutamyl-tRNA(Asn/Gln) amidotransferase subunit B from Thermus thermophilus (strain ATCC 27634 / DSM 579 / HB8).